Consider the following 37-residue polypeptide: Hemextin A (37 aa).

As to quaternary structure, heterotetramer composed of two A and two B chains; non-covalently linked. Does not exist as a complex in the crude venom. May contain several disulfide bonds. Expressed by the venom gland.

It is found in the secreted. Functionally, hemextin A (monomer): exhibits mild anticoagulant activity. It specifically inhibits the activation of FX (F10) by the TF-FVIIa complex (extrinsic tenase complex (ETC)) by non-competitively inhibiting the enzymatic activity of FVIIa. In terms of biological role, hemextin AB complex: specifically inhibits the activation of FX (F10) by the TF-FVIIa complex (extrinsic tenase complex (ETC)) (IC(50)= 100 nM, Ki=25 nM) by non-competitively inhibiting the enzymatic activity of FVIIa. This chain is Hemextin A, found in Hemachatus haemachatus (Rinkhals).